Here is an 852-residue protein sequence, read N- to C-terminus: Lon protease homolog 2, peroxisomal (852 aa).

Ser2 bears the N-acetylserine mark. Residues 13 to 222 (LPLLLTHEGV…MTIPLLVRQI (210 aa)) enclose the Lon N-terminal domain. Position 375–382 (375–382 (GPPGVGKT)) interacts with ATP. Residues 651 to 837 (LSQPGVAIGL…DEVLNAAFDG (187 aa)) form the Lon proteolytic domain. Active-site residues include Ser743 and Lys786. A Microbody targeting signal motif is present at residues 850–852 (SKL).

Belongs to the peptidase S16 family. Interacts with PEX5. Interacts with TYSND1. May interact with enzymes involved in beta-oxidation of fatty acids, including ACOX1/AOX.

It is found in the peroxisome matrix. The catalysed reaction is Hydrolysis of proteins in presence of ATP.. In terms of biological role, ATP-dependent serine protease that mediates the selective degradation of misfolded and unassembled polypeptides in the peroxisomal matrix. Necessary for type 2 peroxisome targeting signal (PTS2)-containing protein processing and facilitates peroxisome matrix protein import. May indirectly regulate peroxisomal fatty acid beta-oxidation through degradation of the self-processed forms of TYSND1. The protein is Lon protease homolog 2, peroxisomal of Bos taurus (Bovine).